Consider the following 352-residue polypeptide: UDP-N-acetylglucosamine--N-acetylmuramyl-(pentapeptide) pyrophosphoryl-undecaprenol N-acetylglucosamine transferase (352 aa).

Residues 14 to 16, Asn124, Arg164, Ser185, and Gln285 each bind UDP-N-acetyl-alpha-D-glucosamine; that span reads TGG.

It belongs to the glycosyltransferase 28 family. MurG subfamily.

The protein localises to the cell inner membrane. The enzyme catalyses di-trans,octa-cis-undecaprenyl diphospho-N-acetyl-alpha-D-muramoyl-L-alanyl-D-glutamyl-meso-2,6-diaminopimeloyl-D-alanyl-D-alanine + UDP-N-acetyl-alpha-D-glucosamine = di-trans,octa-cis-undecaprenyl diphospho-[N-acetyl-alpha-D-glucosaminyl-(1-&gt;4)]-N-acetyl-alpha-D-muramoyl-L-alanyl-D-glutamyl-meso-2,6-diaminopimeloyl-D-alanyl-D-alanine + UDP + H(+). It functions in the pathway cell wall biogenesis; peptidoglycan biosynthesis. Functionally, cell wall formation. Catalyzes the transfer of a GlcNAc subunit on undecaprenyl-pyrophosphoryl-MurNAc-pentapeptide (lipid intermediate I) to form undecaprenyl-pyrophosphoryl-MurNAc-(pentapeptide)GlcNAc (lipid intermediate II). This chain is UDP-N-acetylglucosamine--N-acetylmuramyl-(pentapeptide) pyrophosphoryl-undecaprenol N-acetylglucosamine transferase, found in Chlamydia trachomatis serovar L2 (strain ATCC VR-902B / DSM 19102 / 434/Bu).